Here is a 212-residue protein sequence, read N- to C-terminus: uncharacterized protein (212 aa).

The next 2 helical transmembrane spans lie at 54–74 (LCFALTLLLTLGGTISAGYAG) and 79–99 (WIICGIGLGIIVLTLILALLL).

The protein resides in the cell membrane. This is an uncharacterized protein from Chlamydia pneumoniae (Chlamydophila pneumoniae).